The sequence spans 258 residues: Small ribosomal subunit protein uS2 (258 aa).

Residues 226–258 (AQNKDVEPVADKDEKPEAAPVDEAETATETTGE) are disordered. Positions 229–242 (KDVEPVADKDEKPE) are enriched in basic and acidic residues. The segment covering 245–258 (PVDEAETATETTGE) has biased composition (acidic residues).

It belongs to the universal ribosomal protein uS2 family.

This is Small ribosomal subunit protein uS2 from Solidesulfovibrio magneticus (strain ATCC 700980 / DSM 13731 / RS-1) (Desulfovibrio magneticus).